A 352-amino-acid polypeptide reads, in one-letter code: Phosphoribosylformylglycinamidine cyclo-ligase (352 aa).

This sequence belongs to the AIR synthase family.

It localises to the cytoplasm. The catalysed reaction is 2-formamido-N(1)-(5-O-phospho-beta-D-ribosyl)acetamidine + ATP = 5-amino-1-(5-phospho-beta-D-ribosyl)imidazole + ADP + phosphate + H(+). The protein operates within purine metabolism; IMP biosynthesis via de novo pathway; 5-amino-1-(5-phospho-D-ribosyl)imidazole from N(2)-formyl-N(1)-(5-phospho-D-ribosyl)glycinamide: step 2/2. The protein is Phosphoribosylformylglycinamidine cyclo-ligase of Nitrosospira multiformis (strain ATCC 25196 / NCIMB 11849 / C 71).